A 565-amino-acid polypeptide reads, in one-letter code: E3 ubiquitin-protein ligase RNF168 (565 aa).

The RING-type zinc-finger motif lies at 16-55 (CGICMEILLEPVTLPCNHTLCNPCFQSTVEKANLCCPFCR). A Phosphoserine modification is found at S70. The LR motif 1 motif lies at 110 to 128 (LSEPGELRREYEEEISRVE). Phosphoserine is present on S134. Positions 143–151 (EEYIQRLLA) match the UMI motif motif. Disordered regions lie at residues 150 to 223 (LAEE…KTFG) and 252 to 302 (SKET…PQLC). Over residues 157–179 (EKRQREKRRSEMEEQLRGDEELA) the composition is skewed to basic and acidic residues. An MIU motif 1 motif is present at residues 168–191 (MEEQLRGDEELARSLSTSINSNYE). The span at 181–201 (SLSTSINSNYERNTLASPLSS) shows a compositional bias: polar residues. S197 bears the Phosphoserine mark. K210 is covalently cross-linked (Glycyl lysine isopeptide (Lys-Gly) (interchain with G-Cter in SUMO2)). Positions 275-293 (PTLSPQTCLETQEQGSESS) are enriched in polar residues. S413 and S414 each carry phosphoserine. The MIU motif 2 signature appears at 438-461 (RHKQEEQDRLLALQLQKEVDKEQM). A disordered region spans residues 458-521 (KEQMVPNRQK…TKGDYWEPFK (64 aa)). The LR motif 2 signature appears at 465–476 (RQKGSPDQYQLR). Residues 466–477 (QKGSPDQYQLRT) show a composition bias toward polar residues. Position 469 is a phosphoserine (S469). Positions 504 to 518 (DHSKSPRNTKGDYWE) are enriched in basic and acidic residues. Residue K525 forms a Glycyl lysine isopeptide (Lys-Gly) (interchain with G-Cter in SUMO2) linkage.

Belongs to the RNF168 family. In terms of assembly, monomer. Interacts with UBE2N/UBC13. In terms of processing, sumoylated with SUMO1 by PIAS4 in response to double-strand breaks (DSBs). Ubiquitinated.

It localises to the nucleus. It catalyses the reaction S-ubiquitinyl-[E2 ubiquitin-conjugating enzyme]-L-cysteine + [acceptor protein]-L-lysine = [E2 ubiquitin-conjugating enzyme]-L-cysteine + N(6)-ubiquitinyl-[acceptor protein]-L-lysine.. Its pathway is protein modification; protein ubiquitination. Its function is as follows. E3 ubiquitin-protein ligase required for accumulation of repair proteins to sites of DNA damage. Acts with UBE2N/UBC13 to amplify the RNF8-dependent histone ubiquitination. Recruited to sites of DNA damage at double-strand breaks (DSBs) by binding to ubiquitinated histone H2A and H2AX and amplifies the RNF8-dependent H2A ubiquitination, promoting the formation of 'Lys-63'-linked ubiquitin conjugates. This leads to concentrate ubiquitinated histones H2A and H2AX at DNA lesions to the threshold required for recruitment of TP53BP1 and BRCA1. Also recruited at DNA interstrand cross-links (ICLs) sites and promotes accumulation of 'Lys-63'-linked ubiquitination of histones H2A and H2AX, leading to recruitment of FAAP20 and Fanconi anemia (FA) complex, followed by interstrand cross-link repair. H2A ubiquitination also mediates the ATM-dependent transcriptional silencing at regions flanking DSBs in cis, a mechanism to avoid collision between transcription and repair intermediates. Also involved in class switch recombination in immune system, via its role in regulation of DSBs repair. Following DNA damage, promotes the ubiquitination and degradation of JMJD2A/KDM4A in collaboration with RNF8, leading to unmask H4K20me2 mark and promote the recruitment of TP53BP1 at DNA damage sites. Not able to initiate 'Lys-63'-linked ubiquitination in vitro; possibly due to partial occlusion of the UBE2N/UBC13-binding region. Catalyzes monoubiquitination of 'Lys-13' and 'Lys-15' of nucleosomal histone H2A (H2AK13Ub and H2AK15Ub, respectively). In Mus musculus (Mouse), this protein is E3 ubiquitin-protein ligase RNF168.